We begin with the raw amino-acid sequence, 546 residues long: MFS-type transporter GME11371 (546 aa).

The next 7 membrane-spanning stretches (helical) occupy residues 39–59 (LTYL…DLTI), 77–96 (IGWY…SSWG), 107–127 (MFLL…AAPT), 137–157 (ITGI…AFAV), 167–187 (GGLA…GGVL), 195–215 (WCFY…FLFF), and 240–260 (FPGF…LLWG). An N-linked (GlcNAc...) asparagine glycan is attached at asparagine 267. The next 7 helical transmembrane spans lie at 270–290 (DVIG…VVEW), 307–327 (VVLF…VLVY), 349–369 (LPYI…ISAT), 370–390 (GYFT…AGLI), 402–422 (WIGY…PPIL), 433–453 (VAAT…FMVS), and 509–529 (ISFA…IFMP).

The protein belongs to the major facilitator superfamily.

The protein resides in the cell membrane. The protein operates within secondary metabolite biosynthesis. Functionally, MFS-type transporter; part of the gene cluster that mediates the biosynthesis of dibenzodioxocinones such as pestalotiollide B, a novel class of inhibitors against cholesterol ester transfer protein (CEPT). essential for dibenzodioxocinones biosynthesis and may be involved in the secretion of the cluster products. The polypeptide is MFS-type transporter GME11371 (Pestalotiopsis microspora).